The sequence spans 126 residues: ADMGMTLAGGAYNFGFNTGDATGHSRVESGTAGSAVGSYSYIDANGDRRTVQYSAGPDGFKATGDVGVDRKTAAAAAAMAALAPKAPPAPAPAAPVAPVVPGAWGYWGAPGYSVILPGLAGYAARW.

Positions Gly-9 to Pro-87 constitute a Chitin-binding type R&amp;R domain.

Functionally, component of the rigid cuticle of the spider. This Araneus diadematus (European garden spider) protein is Adult-specific rigid cuticular protein 12.4.